The chain runs to 305 residues: Glutaminase (305 aa).

Substrate-binding residues include Ser61, Asn113, Glu158, Asn165, Tyr189, Tyr241, and Val259.

This sequence belongs to the glutaminase family. In terms of assembly, homotetramer.

It catalyses the reaction L-glutamine + H2O = L-glutamate + NH4(+). The protein is Glutaminase of Alkaliphilus oremlandii (strain OhILAs) (Clostridium oremlandii (strain OhILAs)).